The primary structure comprises 153 residues: Putative transmembrane protein INAFM2 (153 aa).

The segment covering 1-23 has biased composition (basic and acidic residues); sequence MKERDAAPAERGKPATYTGDKKA. Residues 1 to 24 are disordered; the sequence is MKERDAAPAERGKPATYTGDKKAK. The helical transmembrane segment at 36–56 threads the bilayer; sequence LATVFAYVLSVSLAAIVLAVY. The segment at 66 to 153 is disordered; that stretch reads AGTSGGAAGP…EETAAAPGSR (88 aa). Residues 79–101 are compositionally biased toward low complexity; that stretch reads GSNATGPSGTSGAAAAGPNTTGS. The segment covering 118–131 has biased composition (pro residues); that stretch reads PAPPEPPADSPPAG.

Its subcellular location is the membrane. The protein is Putative transmembrane protein INAFM2 of Homo sapiens (Human).